The following is a 377-amino-acid chain: Chaperone protein DnaJ (377 aa).

One can recognise a J domain in the interval 8-73 (CYYETLEVER…DKRAAYDRFG (66 aa)). The segment at 135–213 (GKTAQIEIPV…CSGQGRVTRE (79 aa)) adopts a CR-type zinc-finger fold. 8 residues coordinate Zn(2+): C148, C151, C165, C168, C187, C190, C201, and C204. CXXCXGXG motif repeat units follow at residues 148–155 (CEACSGIG), 165–172 (CSTCGGAG), 187–194 (CPGCQGRG), and 201–208 (CPSCSGQG).

This sequence belongs to the DnaJ family. Homodimer. Zn(2+) serves as cofactor.

It localises to the cytoplasm. Functionally, participates actively in the response to hyperosmotic and heat shock by preventing the aggregation of stress-denatured proteins and by disaggregating proteins, also in an autonomous, DnaK-independent fashion. Unfolded proteins bind initially to DnaJ; upon interaction with the DnaJ-bound protein, DnaK hydrolyzes its bound ATP, resulting in the formation of a stable complex. GrpE releases ADP from DnaK; ATP binding to DnaK triggers the release of the substrate protein, thus completing the reaction cycle. Several rounds of ATP-dependent interactions between DnaJ, DnaK and GrpE are required for fully efficient folding. Also involved, together with DnaK and GrpE, in the DNA replication of plasmids through activation of initiation proteins. The chain is Chaperone protein DnaJ from Bradyrhizobium diazoefficiens (strain JCM 10833 / BCRC 13528 / IAM 13628 / NBRC 14792 / USDA 110).